Consider the following 130-residue polypeptide: Small ribosomal subunit protein uS8 (130 aa).

The protein belongs to the universal ribosomal protein uS8 family. Part of the 30S ribosomal subunit. Contacts proteins S5 and S12.

Functionally, one of the primary rRNA binding proteins, it binds directly to 16S rRNA central domain where it helps coordinate assembly of the platform of the 30S subunit. This Aeromonas hydrophila subsp. hydrophila (strain ATCC 7966 / DSM 30187 / BCRC 13018 / CCUG 14551 / JCM 1027 / KCTC 2358 / NCIMB 9240 / NCTC 8049) protein is Small ribosomal subunit protein uS8.